The following is a 148-amino-acid chain: Large ribosomal subunit protein bL9 (148 aa).

The protein belongs to the bacterial ribosomal protein bL9 family.

In terms of biological role, binds to the 23S rRNA. This Desulfatibacillum aliphaticivorans protein is Large ribosomal subunit protein bL9.